A 246-amino-acid polypeptide reads, in one-letter code: Bis(5'-nucleosyl)-tetraphosphatase PrpE [asymmetrical] (246 aa).

Belongs to the PrpE family. The cofactor is Ni(2+).

The catalysed reaction is P(1),P(4)-bis(5'-guanosyl) tetraphosphate + H2O = GMP + GTP + 2 H(+). Functionally, asymmetrically hydrolyzes Ap4p to yield AMP and ATP. This Bacillus anthracis (strain A0248) protein is Bis(5'-nucleosyl)-tetraphosphatase PrpE [asymmetrical].